A 307-amino-acid polypeptide reads, in one-letter code: Geranylgeranyl diphosphate synthase (307 aa).

The isopentenyl diphosphate site is built by Lys-52, Arg-55, and His-86. Residues Asp-93 and Asp-99 each coordinate Mg(2+). Arg-104 is a (2E,6E)-farnesyl diphosphate binding site. Arg-105 serves as a coordination point for isopentenyl diphosphate. Lys-188, Thr-189, and Gln-226 together coordinate (2E,6E)-farnesyl diphosphate.

This sequence belongs to the FPP/GGPP synthase family. The cofactor is Mg(2+).

It carries out the reaction isopentenyl diphosphate + (2E,6E)-farnesyl diphosphate = (2E,6E,10E)-geranylgeranyl diphosphate + diphosphate. Its pathway is isoprenoid biosynthesis; geranylgeranyl diphosphate biosynthesis; geranylgeranyl diphosphate from farnesyl diphosphate and isopentenyl diphosphate: step 1/1. Catalyzes the condensation of farnesyl diphosphate (FPP) and isopentenyl diphosphate (IPP) to yield geranylgeranyl diphosphate (GGPP) needed for biosynthesis of carotenoids and diterpenes. In Pseudescherichia vulneris (Escherichia vulneris), this protein is Geranylgeranyl diphosphate synthase (crtE).